Reading from the N-terminus, the 126-residue chain is Putative regulator AldR (126 aa).

The protein belongs to the RutC family.

Implicated in the regulation of isoleucine biosynthesis. The polypeptide is Putative regulator AldR (aldR) (Lactococcus lactis subsp. lactis (strain IL1403) (Streptococcus lactis)).